The primary structure comprises 721 residues: Peroxisomal fatty acid beta-oxidation multifunctional protein AIM1 (721 aa).

Glu116 serves as the catalytic Nucleophile. Glu136 (proton acceptor) is an active-site residue. The Microbody targeting signal motif lies at 719-721 (SKL).

This sequence in the N-terminal section; belongs to the enoyl-CoA hydratase/isomerase family. The protein in the central section; belongs to the 3-hydroxyacyl-CoA dehydrogenase family. In terms of tissue distribution, widely expressed.

It is found in the peroxisome. The catalysed reaction is a (3S)-3-hydroxyacyl-CoA = a (2E)-enoyl-CoA + H2O. It carries out the reaction a 4-saturated-(3S)-3-hydroxyacyl-CoA = a (3E)-enoyl-CoA + H2O. It catalyses the reaction (3S)-3-hydroxybutanoyl-CoA = (2E)-butenoyl-CoA + H2O. The enzyme catalyses (3S)-hydroxyoctanoyl-CoA = (2E)-octenoyl-CoA + H2O. The catalysed reaction is (3S)-3-hydroxydodecanoyl-CoA = (2E)-dodecenoyl-CoA + H2O. It carries out the reaction (3S)-hydroxytetradecanoyl-CoA = (2E)-tetradecenoyl-CoA + H2O. It catalyses the reaction (3S)-hydroxyhexanoyl-CoA = (2E)-hexenoyl-CoA + H2O. The enzyme catalyses a (3Z)-enoyl-CoA = a 4-saturated (2E)-enoyl-CoA. The catalysed reaction is a (3E)-enoyl-CoA = a 4-saturated (2E)-enoyl-CoA. It carries out the reaction (3S)-3-hydroxybutanoyl-CoA = (3R)-3-hydroxybutanoyl-CoA. It catalyses the reaction a (3S)-3-hydroxyacyl-CoA + NAD(+) = a 3-oxoacyl-CoA + NADH + H(+). The enzyme catalyses (3S)-3-hydroxybutanoyl-CoA + NAD(+) = acetoacetyl-CoA + NADH + H(+). The catalysed reaction is (3S)-hydroxyhexanoyl-CoA + NAD(+) = 3-oxohexanoyl-CoA + NADH + H(+). It carries out the reaction (3S)-hydroxyoctanoyl-CoA + NAD(+) = 3-oxooctanoyl-CoA + NADH + H(+). It catalyses the reaction (3S)-3-hydroxydodecanoyl-CoA + NAD(+) = 3-oxododecanoyl-CoA + NADH + H(+). The enzyme catalyses (3S)-hydroxytetradecanoyl-CoA + NAD(+) = 3-oxotetradecanoyl-CoA + NADH + H(+). It functions in the pathway lipid metabolism; fatty acid beta-oxidation. Functionally, involved in peroxisomal fatty acid beta-oxidation. Required for wound-induced jasmonate biosynthesis. Possesses enoyl-CoA hydratase activity against short chain substrates (C4-C6) and 3-hydroxyacyl-CoA dehydrogenase activity against chains of variable sizes (C6-C16). Possesses cinnamoyl-CoA hydratase activity and is involved in the peroxisomal beta-oxidation pathway for the biosynthesis of benzoic acid (BA). Required for the accumulation in seeds of benzoylated glucosinolates (BGs) and substituted hydroxybenzoylated choline esters, which are BA-containing secondary metabolites. Required for salicylic acid (SA) in seeds. In Arabidopsis thaliana (Mouse-ear cress), this protein is Peroxisomal fatty acid beta-oxidation multifunctional protein AIM1 (AIM1).